The sequence spans 27 residues: Conotoxin Bt9.2 (27 aa).

3 disulfide bridges follow: Cys2-Cys16, Cys6-Cys19, and Cys12-Cys24. Pro13 is modified (4-hydroxyproline).

As to expression, expressed by the venom duct.

The protein resides in the secreted. Functionally, probable neurotoxin that inhibits ion channels. In Conus betulinus (Beech cone), this protein is Conotoxin Bt9.2.